Reading from the N-terminus, the 491-residue chain is MKLSTKLCWCGIKGRLRPQKQQQLHNTNLQMTELKKQKTAEQKTRPQNVGIKGIQIYIPTQCVNQSELEKFDGVSQGKYTIGLGQTNMSFVNDREDIYSMSLTVLSKLIKSYNIDTNKIGRLEVGTETLIDKSKSVKSVLMQLFGENTDVEGIDTLNACYGGTNALFNSLNWIESNAWDGRDAIVVCGDIAIYDKGAARPTGGAGTVAMWIGPDAPIVFDSVRASYMEHAYDFYKPDFTSEYPYVDGHFSLTCYVKALDQVYKSYSKKAISKGLVSDPAGSDALNVLKYFDYNVFHVPTCKLVTKSYGRLLYNDFRANPQLFPEVDAELATRDYDESLTDKNIEKTFVNVAKPFHKERVAQSLIVPTNTGNMYTASVYAAFASLLNYVGSDDLQGKRVGLFSYGSGLAASLYSCKIVGDVQHIIKELDITNKLAKRITETPKDYEAAIELRENAHLKKNFKPQGSIEHLQSGVYYLTNIDDKFRRSYDVKK.

Glu-127 serves as the catalytic Proton donor/acceptor. Cys-159 (acyl-thioester intermediate) is an active-site residue. Positions 159, 201, and 250 each coordinate (3S)-3-hydroxy-3-methylglutaryl-CoA. Ser-276 carries the post-translational modification Phosphoserine. His-296 acts as the Proton donor/acceptor in catalysis. 4 residues coordinate (3S)-3-hydroxy-3-methylglutaryl-CoA: His-296, Lys-305, Asn-371, and Ser-405.

Belongs to the thiolase-like superfamily. HMG-CoA synthase family.

It carries out the reaction acetoacetyl-CoA + acetyl-CoA + H2O = (3S)-3-hydroxy-3-methylglutaryl-CoA + CoA + H(+). Its pathway is metabolic intermediate biosynthesis; (R)-mevalonate biosynthesis; (R)-mevalonate from acetyl-CoA: step 2/3. Functionally, hydroxymethylglutaryl-CoA synthase; part of the first module of ergosterol biosynthesis pathway that includes the early steps of the pathway, conserved across all eukaryotes, and which results in the formation of mevalonate from acetyl-coenzyme A (acetyl-CoA). ERG13 condenses acetyl-CoA with acetoacetyl-CoA to form hydroxymethylglutaryl-CoA (HMG-CoA). The first module starts with the action of the cytosolic acetyl-CoA acetyltransferase ERG10 that catalyzes the formation of acetoacetyl-CoA. The hydroxymethylglutaryl-CoA synthase ERG13 then condenses acetyl-CoA with acetoacetyl-CoA to form HMG-CoA. The rate-limiting step of the early module is the reduction to mevalonate by the 3-hydroxy-3-methylglutaryl-coenzyme A (HMG-CoA) reductases HMG1 and HMG2 which are derived from a single ancestral HMGR gene by gene duplication. The protein is Hydroxymethylglutaryl-CoA synthase of Saccharomyces cerevisiae (strain ATCC 204508 / S288c) (Baker's yeast).